A 570-amino-acid chain; its full sequence is Zeta-carotene desaturase, chloroplastic/chromoplastic (570 aa).

Low complexity predominate over residues 1 to 16 (MASVAATTTLAPALAP). The interval 1–33 (MASVAATTTLAPALAPRRARPGTGLVPPRRASA) is disordered.

Belongs to the zeta carotene desaturase family. It depends on NAD(+) as a cofactor. NADP(+) is required as a cofactor. FAD serves as cofactor.

The protein localises to the plastid. It localises to the chloroplast. Its subcellular location is the chromoplast. It catalyses the reaction 9,9'-di-cis-zeta-carotene + 2 a quinone = 7,7',9,9'-tetra-cis-lycopene + 2 a quinol. It participates in carotenoid biosynthesis; lycopene biosynthesis. In terms of biological role, catalyzes the conversion of zeta-carotene to lycopene via the intermediary of neurosporene. It carries out two consecutive desaturations (introduction of double bonds) at positions C-7 and C-7'. In Zea mays (Maize), this protein is Zeta-carotene desaturase, chloroplastic/chromoplastic (ZDS1).